A 214-amino-acid chain; its full sequence is Phosphopantothenoylcysteine decarboxylase HAL3 (214 aa).

Residues 30–32 (GSV) and 55–57 (TRA) contribute to the FMN site. His92 (proton donor) is an active-site residue. Residues 108-111 (SANT) and Ala142 each bind FMN. N-[(R)-4-phosphopantothenoyl]-L-cysteine-binding residues include Asn144, Arg174, and Ala176. Cys177 functions as the Proton donor in the catalytic mechanism. Met185 provides a ligand contact to N-[(R)-4-phosphopantothenoyl]-L-cysteine.

Belongs to the HFCD (homooligomeric flavin containing Cys decarboxylase) superfamily. As to quaternary structure, homotrimer. The cofactor is FMN. In terms of tissue distribution, mainly expressed in stems, to a lower extent in flowers, leaves and fruits, and at basal levels in roots.

The protein localises to the cell membrane. Its subcellular location is the cytoplasm. It carries out the reaction N-[(R)-4-phosphopantothenoyl]-L-cysteine + H(+) = (R)-4'-phosphopantetheine + CO2. It participates in cofactor biosynthesis; coenzyme A biosynthesis; CoA from (R)-pantothenate: step 3/5. Functionally, involved in plant growth, and promotes salt and osmotic tolerance, probably via coenzyme A (CoA) accumulation and endogenous proline accumulation. Catalyzes the decarboxylation of 4'-phosphopantothenoylcysteine to 4'-phosphopantetheine, a key step in coenzyme A biosynthesis. Required for roots development. The chain is Phosphopantothenoylcysteine decarboxylase HAL3 from Malus domestica (Apple).